A 164-amino-acid chain; its full sequence is Phosphopantetheine adenylyltransferase (164 aa).

Ser-9 contacts substrate. ATP is bound by residues 9-10 (SF) and His-17. Substrate contacts are provided by Lys-41, Leu-73, and Lys-87. ATP contacts are provided by residues 88 to 90 (GLR), Glu-98, and 123 to 129 (HSFLSSS).

It belongs to the bacterial CoaD family. Homohexamer. The cofactor is Mg(2+).

The protein resides in the cytoplasm. It catalyses the reaction (R)-4'-phosphopantetheine + ATP + H(+) = 3'-dephospho-CoA + diphosphate. Its pathway is cofactor biosynthesis; coenzyme A biosynthesis; CoA from (R)-pantothenate: step 4/5. Functionally, reversibly transfers an adenylyl group from ATP to 4'-phosphopantetheine, yielding dephospho-CoA (dPCoA) and pyrophosphate. The sequence is that of Phosphopantetheine adenylyltransferase from Rubrobacter xylanophilus (strain DSM 9941 / JCM 11954 / NBRC 16129 / PRD-1).